We begin with the raw amino-acid sequence, 501 residues long: Acyl-CoA-binding domain-containing protein 5A (501 aa).

One can recognise an ACB domain in the interval 9–98 (YEQRFNAAVK…LKLILESMPV (90 aa)). Residues 20–29 (IQNLPPNGSF), 40–44 (YSYYK), Lys-66, and Tyr-85 contribute to the an acyl-CoA site. The interval 173–405 (IDLEDREDDD…GERWGADGPM (233 aa)) is disordered. The span at 176 to 195 (EDREDDDDEDEEGERDEVEE) shows a compositional bias: acidic residues. Residues 219 to 235 (SNGSISQHKGLSNGTHG) are compositionally biased toward polar residues. Basic and acidic residues-rich tracts occupy residues 236–254 (SKSD…HMNH), 266–283 (NSEK…HVAS), and 328–366 (RSQD…KRSD). Residues 376 to 389 (SRSPASGSGSAGPQ) show a composition bias toward low complexity. Residues 406–437 (TENLNEQIICALARLQDDMQSVLQRLHTLEAL) adopt a coiled-coil conformation. The chain crosses the membrane as a helical span at residues 465–485 (WWPFDVSLGTVAFAVVWPFVV).

This sequence belongs to the ATG37 family.

The protein resides in the membrane. Functionally, acyl-CoA binding protein which acts as the peroxisome receptor for pexophagy but is dispensable for aggrephagy and nonselective autophagy. Binds medium- and long-chain acyl-CoA esters. The sequence is that of Acyl-CoA-binding domain-containing protein 5A (acbd5a) from Danio rerio (Zebrafish).